Consider the following 105-residue polypeptide: uncharacterized protein (105 aa).

The interval 47–105 (ENASAPRIQPSVTPSPAAPPSTDQLMMEKMMGSAGLNKYRKQEKEKQEEDGNGESLFDF) is disordered. The segment covering 86 to 95 (RKQEKEKQEE) has biased composition (basic and acidic residues).

This is an uncharacterized protein from Bacillus subtilis (strain 168).